The following is a 364-amino-acid chain: Phosphoserine aminotransferase (364 aa).

Residue Arg42 participates in L-glutamate binding. Pyridoxal 5'-phosphate-binding positions include Gly76–Arg77, Trp102, Thr156, Asp175, and Gln198. Residue Lys199 is modified to N6-(pyridoxal phosphate)lysine. Residue Asn240 to Thr241 coordinates pyridoxal 5'-phosphate.

It belongs to the class-V pyridoxal-phosphate-dependent aminotransferase family. SerC subfamily. Homodimer. Pyridoxal 5'-phosphate serves as cofactor.

The protein resides in the cytoplasm. It carries out the reaction O-phospho-L-serine + 2-oxoglutarate = 3-phosphooxypyruvate + L-glutamate. It catalyses the reaction 4-(phosphooxy)-L-threonine + 2-oxoglutarate = (R)-3-hydroxy-2-oxo-4-phosphooxybutanoate + L-glutamate. It functions in the pathway amino-acid biosynthesis; L-serine biosynthesis; L-serine from 3-phospho-D-glycerate: step 2/3. The protein operates within cofactor biosynthesis; pyridoxine 5'-phosphate biosynthesis; pyridoxine 5'-phosphate from D-erythrose 4-phosphate: step 3/5. Its function is as follows. Catalyzes the reversible conversion of 3-phosphohydroxypyruvate to phosphoserine and of 3-hydroxy-2-oxo-4-phosphonooxybutanoate to phosphohydroxythreonine. This Shewanella sediminis (strain HAW-EB3) protein is Phosphoserine aminotransferase.